A 141-amino-acid polypeptide reads, in one-letter code: uncharacterized protein (141 aa).

This is an uncharacterized protein from Listeria innocua serovar 6a (strain ATCC BAA-680 / CLIP 11262).